The primary structure comprises 268 residues: Interferon alpha/beta receptor 2 (268 aa).

The first 16 residues, 1–16 (MGPWTLLLLHLPLVVS), serve as a signal peptide directing secretion. At 17–223 (MLPAPTNVSI…TSPTAANTVP (207 aa)) the chain is on the extracellular side. 2 consecutive Fibronectin type-III domains span residues 18-114 (LPAP…LTDT) and 115-217 (LLGP…TSPT). 2 disulfides stabilise this stretch: Cys-65–Cys-74 and Cys-191–Cys-211. A helical membrane pass occupies residues 224-244 (VVLSVLCAFSLLVVLLCGIVV). Residues 245-268 (YSGRLLCMHKPLPKTLSSVPLCGG) are Cytoplasmic-facing.

Belongs to the type II cytokine receptor family. As to quaternary structure, heterodimer with IFNAR1; forming the receptor for type I interferon.

It localises to the cell membrane. The protein resides in the cytoplasm. Its function is as follows. Together with IFNAR1, forms the heterodimeric receptor for type I interferons (including interferons alpha, beta, epsilon, omega and kappa). Type I interferon binding activates the JAK-STAT signaling cascade, resulting in transcriptional activation or repression of interferon-regulated genes that encode the effectors of the interferon response. Mechanistically, type I interferon-binding brings the IFNAR1 and IFNAR2 subunits into close proximity with one another, driving their associated Janus kinases (JAKs) (TYK2 bound to IFNAR1 and JAK1 bound to IFNAR2) to cross-phosphorylate one another. The activated kinases phosphorylate specific tyrosine residues on the intracellular domains of IFNAR1 and IFNAR2, forming docking sites for the STAT transcription factors (STAT1, STAT2 and STAT). STAT proteins are then phosphorylated by the JAKs, promoting their translocation into the nucleus to regulate expression of interferon-regulated genes. The sequence is that of Interferon alpha/beta receptor 2 from Oncorhynchus mykiss (Rainbow trout).